Consider the following 363-residue polypeptide: Protein-arginine kinase (363 aa).

Positions 24-254 constitute a Phosphagen kinase C-terminal domain; that stretch reads IVLSSRIRLA…AQLIEQERSA (231 aa). Residues 27-31, His92, Arg125, 176-180, and 207-212 contribute to the ATP site; these read SSRIR, RASVM, and RGIYGE. An RDXXRA motif of the pArg binding pocket involved in allosteric regulation motif is present at residues 337-342; the sequence is RDIKRA.

It belongs to the ATP:guanido phosphotransferase family.

The catalysed reaction is L-arginyl-[protein] + ATP = N(omega)-phospho-L-arginyl-[protein] + ADP + H(+). With respect to regulation, appears to be allosterically activated by the binding of pArg-containing polypeptides to the pArg-binding pocket localized in the C-terminal domain of McsB. Its function is as follows. Catalyzes the specific phosphorylation of arginine residues in a large number of proteins. Is part of the bacterial stress response system. Protein arginine phosphorylation has a physiologically important role and is involved in the regulation of many critical cellular processes, such as protein homeostasis, motility, competence, and stringent and stress responses, by regulating gene expression and protein activity. The protein is Protein-arginine kinase of Bacillus pumilus (strain SAFR-032).